The sequence spans 232 residues: 7-cyano-7-deazaguanine synthase (232 aa).

An ATP-binding site is contributed by 8–18; it reads FSGGQDSTTCL. Zn(2+) is bound by residues cysteine 187, cysteine 196, cysteine 199, and cysteine 202.

It belongs to the QueC family. Zn(2+) serves as cofactor.

It catalyses the reaction 7-carboxy-7-deazaguanine + NH4(+) + ATP = 7-cyano-7-deazaguanine + ADP + phosphate + H2O + H(+). It functions in the pathway purine metabolism; 7-cyano-7-deazaguanine biosynthesis. Its function is as follows. Catalyzes the ATP-dependent conversion of 7-carboxy-7-deazaguanine (CDG) to 7-cyano-7-deazaguanine (preQ(0)). This Vibrio parahaemolyticus serotype O3:K6 (strain RIMD 2210633) protein is 7-cyano-7-deazaguanine synthase.